The chain runs to 380 residues: Chaperone protein DnaJ (380 aa).

A J domain is found at 5 to 70 (DFYETLGVSK…QKRAAYDRFG (66 aa)). The CR-type zinc-finger motif lies at 141 to 219 (GKTAQIRVPT…CHGQGRVTEE (79 aa)). 8 residues coordinate Zn(2+): Cys154, Cys157, Cys171, Cys174, Cys193, Cys196, Cys207, and Cys210. 4 CXXCXGXG motif repeats span residues 154 to 161 (CEVCSGSG), 171 to 178 (CATCQGSG), 193 to 200 (CPTCQGRG), and 207 to 214 (CGKCHGQG).

This sequence belongs to the DnaJ family. Homodimer. Zn(2+) is required as a cofactor.

It is found in the cytoplasm. In terms of biological role, participates actively in the response to hyperosmotic and heat shock by preventing the aggregation of stress-denatured proteins and by disaggregating proteins, also in an autonomous, DnaK-independent fashion. Unfolded proteins bind initially to DnaJ; upon interaction with the DnaJ-bound protein, DnaK hydrolyzes its bound ATP, resulting in the formation of a stable complex. GrpE releases ADP from DnaK; ATP binding to DnaK triggers the release of the substrate protein, thus completing the reaction cycle. Several rounds of ATP-dependent interactions between DnaJ, DnaK and GrpE are required for fully efficient folding. Also involved, together with DnaK and GrpE, in the DNA replication of plasmids through activation of initiation proteins. The sequence is that of Chaperone protein DnaJ from Allorhizobium ampelinum (strain ATCC BAA-846 / DSM 112012 / S4) (Agrobacterium vitis (strain S4)).